Reading from the N-terminus, the 274-residue chain is uncharacterized protein (274 aa).

A signal peptide spans 1–30 (MTVYTPTSERQAPATTHRQMWALGDYAAIA).

The protein to M.tuberculosis Rv1405c.

This is an uncharacterized protein from Mycobacterium tuberculosis (strain CDC 1551 / Oshkosh).